The following is a 395-amino-acid chain: Glutamate N-acetyltransferase (395 aa).

6 residues coordinate substrate: Thr146, Lys169, Thr180, Glu263, Asn390, and Thr395. Thr180 serves as the catalytic Nucleophile.

Belongs to the ArgJ family. As to quaternary structure, heterotetramer of two alpha and two beta chains.

It is found in the cytoplasm. It carries out the reaction N(2)-acetyl-L-ornithine + L-glutamate = N-acetyl-L-glutamate + L-ornithine. It functions in the pathway amino-acid biosynthesis; L-arginine biosynthesis; L-ornithine and N-acetyl-L-glutamate from L-glutamate and N(2)-acetyl-L-ornithine (cyclic): step 1/1. Its function is as follows. Catalyzes the transfer of the acetyl group from N(2)-acetylornithine to glutamate, forming N-acetylglutamate and L-ornithine. The protein is Glutamate N-acetyltransferase of Methanosarcina acetivorans (strain ATCC 35395 / DSM 2834 / JCM 12185 / C2A).